Here is a 144-residue protein sequence, read N- to C-terminus: Histone H3.1 (144 aa).

The segment at 1–45 (MARTKQSARKTTGGKAPRKQLSAKSARKGVSPASSAGAKKSRYRP) is disordered. An N6,N6,N6-trimethyllysine; alternate modification is found at K5. K5 is subject to N6,N6-dimethyllysine; alternate. Residues K5 and K10 each carry the N6-methyllysine; alternate modification. Residues K10, K15, K19, K24, K28, and K39 each carry the N6-acetyllysine; alternate modification. K15 is modified (N6,N6-dimethyllysine; alternate). K19, K24, K28, and K39 each carry N6-methyllysine; alternate. N6,N6,N6-trimethyllysine; alternate is present on residues K28 and K39. 2 positions are modified to N6,N6-dimethyllysine; alternate: K28 and K39. Residue K58 is modified to N6-acetyllysine.

The protein belongs to the histone H3 family. The nucleosome is a histone octamer containing two molecules each of H2A, H2B, H3 and H4 assembled in one H3-H4 heterotetramer and two H2A-H2B heterodimers. The octamer wraps approximately 147 bp of DNA. In terms of processing, mono-, di- and trimethylated to form H3K4me1/2/3. H3K4me activates gene expression by regulating transcription elongation and plays a role in telomere length maintenance. H3K4me enrichment correlates with transcription levels, and occurs in a 5' to 3' gradient with H3K4me3 enrichment at the 5'-end of genes, shifting to H3K4me2 and then H3K4me1. H3K36me represses gene expression. Acetylation of histone H3 leads to transcriptional activation.

The protein localises to the nucleus. It localises to the chromosome. Its function is as follows. Core component of nucleosome. Nucleosomes wrap and compact DNA into chromatin, limiting DNA accessibility to the cellular machineries which require DNA as a template. Histones thereby play a central role in transcription regulation, DNA repair, DNA replication and chromosomal stability. DNA accessibility is regulated via a complex set of post-translational modifications of histones, also called histone code, and nucleosome remodeling. This is Histone H3.1 (HHT1) from Encephalitozoon cuniculi (strain GB-M1) (Microsporidian parasite).